The chain runs to 199 residues: NAD(P)H dehydrogenase (quinone) (199 aa).

Residues 4-190 (MLVLYYSAYG…DGARFQGRRV (187 aa)) form the Flavodoxin-like domain. Residues 10–15 (SAYGHM) and 78–80 (TRY) contribute to the FMN site. Tyrosine 12 contributes to the NAD(+) binding site. Residue tryptophan 98 coordinates substrate. Residues 113–119 (STATQYG) and histidine 134 contribute to the FMN site. A disordered region spans residues 162 to 181 (GMTTTADGDGSRQPSAQELD). Over residues 163–177 (MTTTADGDGSRQPSA) the composition is skewed to polar residues.

Belongs to the WrbA family. FMN is required as a cofactor.

It carries out the reaction a quinone + NADH + H(+) = a quinol + NAD(+). The enzyme catalyses a quinone + NADPH + H(+) = a quinol + NADP(+). In Brucella suis (strain ATCC 23445 / NCTC 10510), this protein is NAD(P)H dehydrogenase (quinone).